The sequence spans 962 residues: Translation initiation factor IF-2 (962 aa).

The segment at 99–365 (VKAAQTQAAP…GKKGKKLKLE (267 aa)) is disordered. Residues 117 to 141 (DAAKARAEAAARAEARAKAEAEAAK) are compositionally biased toward basic and acidic residues. Over residues 145 to 155 (AKAGNKAKPAA) the composition is skewed to low complexity. Residues 173-216 (KPAEESKAEKAQADKMPSKKPAEPKEKAAKPKHERNGKGKDAKK) are compositionally biased toward basic and acidic residues. Over residues 219-234 (KPAAPAVPQPVVSAEE) the composition is skewed to low complexity. Positions 235–269 (QAQRDEEARRAAALRAHQEALLKEKQERQARREAM) are enriched in basic and acidic residues. Low complexity predominate over residues 270 to 283 (KQQAEQQAKAAQEA). Basic and acidic residues predominate over residues 338 to 354 (GGRDRNNARNGDDERVR). A tr-type G domain is found at 462 to 631 (PRPPVVTVMG…LLEAEVLELT (170 aa)). Residues 471-478 (GHVDHGKT) form a G1 region. 471-478 (GHVDHGKT) is a binding site for GTP. Positions 496 to 500 (GITQH) are G2. A G3 region spans residues 517–520 (DTPG). GTP-binding positions include 517 to 521 (DTPGH) and 571 to 574 (NKID). The segment at 571-574 (NKID) is G4. Residues 607-609 (SAK) are G5.

This sequence belongs to the TRAFAC class translation factor GTPase superfamily. Classic translation factor GTPase family. IF-2 subfamily.

It localises to the cytoplasm. In terms of biological role, one of the essential components for the initiation of protein synthesis. Protects formylmethionyl-tRNA from spontaneous hydrolysis and promotes its binding to the 30S ribosomal subunits. Also involved in the hydrolysis of GTP during the formation of the 70S ribosomal complex. This is Translation initiation factor IF-2 from Neisseria meningitidis serogroup C (strain 053442).